Consider the following 165-residue polypeptide: Transcription antitermination protein NusB (165 aa).

Belongs to the NusB family.

Its function is as follows. Involved in transcription antitermination. Required for transcription of ribosomal RNA (rRNA) genes. Binds specifically to the boxA antiterminator sequence of the ribosomal RNA (rrn) operons. The sequence is that of Transcription antitermination protein NusB from Nitratidesulfovibrio vulgaris (strain DSM 19637 / Miyazaki F) (Desulfovibrio vulgaris).